A 62-amino-acid chain; its full sequence is UPF0434 protein Smed_3047 (62 aa).

The protein belongs to the UPF0434 family.

This Sinorhizobium medicae (strain WSM419) (Ensifer medicae) protein is UPF0434 protein Smed_3047.